We begin with the raw amino-acid sequence, 474 residues long: Adenosylhomocysteinase (474 aa).

Residues Thr-61, Asp-136, and Glu-196 each coordinate substrate. NAD(+) is bound at residue 197-199 (TTT). Residues Lys-226 and Asp-230 each contribute to the substrate site. Residues Asn-231, 260 to 265 (GYGDVG), Glu-283, Asn-318, 339 to 341 (IGH), and Asn-384 each bind NAD(+).

The protein belongs to the adenosylhomocysteinase family. NAD(+) is required as a cofactor.

It localises to the cytoplasm. The catalysed reaction is S-adenosyl-L-homocysteine + H2O = L-homocysteine + adenosine. The protein operates within amino-acid biosynthesis; L-homocysteine biosynthesis; L-homocysteine from S-adenosyl-L-homocysteine: step 1/1. May play a key role in the regulation of the intracellular concentration of adenosylhomocysteine. This is Adenosylhomocysteinase from Ralstonia pickettii (strain 12J).